A 433-amino-acid chain; its full sequence is MSKIVKVIGREIIDSRGNPTVEAEVHLEGGFVGMAAAPSGASTGSREALELRDGDKSRFLGKGVLKAVSAVNGPIAEVIIGKDAKDQANIDQIMIELDGTENKSKFGANAILAVSLANAKAAAAAKGMPLYAHIAELNGTPGKYSMPLPMMNIINGGEHADNNVDIQEFMIQPVGAKTLKEAVRIGSEVFHNLAKVLKSKGMNTAVGDEGGYAPNLESNAAALAAIKEAVEKAGYVLGKDVTLAMDCAASEFYNKETGMYELKGEGKSFTSNEFTHYLEGLTKEYPIVSIEDGLDESDWDGFAYQTKVMGGKLQLVGDDLFVTNTKILKEGIEKGIANSILIKFNQIGSLTETLAAIKMAKDAGYTAVISHRSGETEDATIADLAVGTAAGQIKTGSMSRSDRVAKYNQLIRIEEALGAAAPFNGLKEVKGQH.

(2R)-2-phosphoglycerate is bound at residue Gln-167. Glu-209 functions as the Proton donor in the catalytic mechanism. Asp-246, Glu-291, and Asp-318 together coordinate Mg(2+). (2R)-2-phosphoglycerate contacts are provided by Lys-343, Arg-372, Ser-373, and Lys-394. Lys-343 serves as the catalytic Proton acceptor.

This sequence belongs to the enolase family. In terms of assembly, component of the RNA degradosome, a multiprotein complex involved in RNA processing and mRNA degradation. Mg(2+) serves as cofactor.

It is found in the cytoplasm. Its subcellular location is the secreted. The protein resides in the cell surface. The catalysed reaction is (2R)-2-phosphoglycerate = phosphoenolpyruvate + H2O. The protein operates within carbohydrate degradation; glycolysis; pyruvate from D-glyceraldehyde 3-phosphate: step 4/5. In terms of biological role, catalyzes the reversible conversion of 2-phosphoglycerate (2-PG) into phosphoenolpyruvate (PEP). It is essential for the degradation of carbohydrates via glycolysis. This chain is Enolase, found in Edwardsiella ictaluri (strain 93-146).